We begin with the raw amino-acid sequence, 195 residues long: dTTP/UTP pyrophosphatase (195 aa).

Asp73 (proton acceptor) is an active-site residue.

The protein belongs to the Maf family. YhdE subfamily. A divalent metal cation serves as cofactor.

Its subcellular location is the cytoplasm. It carries out the reaction dTTP + H2O = dTMP + diphosphate + H(+). The catalysed reaction is UTP + H2O = UMP + diphosphate + H(+). In terms of biological role, nucleoside triphosphate pyrophosphatase that hydrolyzes dTTP and UTP. May have a dual role in cell division arrest and in preventing the incorporation of modified nucleotides into cellular nucleic acids. This is dTTP/UTP pyrophosphatase from Deinococcus radiodurans (strain ATCC 13939 / DSM 20539 / JCM 16871 / CCUG 27074 / LMG 4051 / NBRC 15346 / NCIMB 9279 / VKM B-1422 / R1).